The chain runs to 312 residues: Ribose-phosphate pyrophosphokinase (312 aa).

Residues 34-36 and 93-94 contribute to the ATP site; these read DQE and RQ. His-127 and Asp-167 together coordinate Mg(2+). Lys-191 is an active-site residue. Residues Arg-193, Asp-217, and 221–225 contribute to the D-ribose 5-phosphate site; that span reads DSGGT.

This sequence belongs to the ribose-phosphate pyrophosphokinase family. Class I subfamily. As to quaternary structure, homohexamer. Requires Mg(2+) as cofactor.

Its subcellular location is the cytoplasm. It catalyses the reaction D-ribose 5-phosphate + ATP = 5-phospho-alpha-D-ribose 1-diphosphate + AMP + H(+). It functions in the pathway metabolic intermediate biosynthesis; 5-phospho-alpha-D-ribose 1-diphosphate biosynthesis; 5-phospho-alpha-D-ribose 1-diphosphate from D-ribose 5-phosphate (route I): step 1/1. Its function is as follows. Involved in the biosynthesis of the central metabolite phospho-alpha-D-ribosyl-1-pyrophosphate (PRPP) via the transfer of pyrophosphoryl group from ATP to 1-hydroxyl of ribose-5-phosphate (Rib-5-P). The chain is Ribose-phosphate pyrophosphokinase from Hyphomonas neptunium (strain ATCC 15444).